A 511-amino-acid chain; its full sequence is Ribosome biogenesis protein YTM1 (511 aa).

The tract at residues 9–112 (VKVVFVTRDE…EVSLSIEYIR (104 aa)) is ubiquitin-like (UBL) domain. The sufficient for interaction with ERB1 and association with 66S pre-ribosomes stretch occupies residues 122 to 511 (SFSNPDWVAA…IQINNNPQSA (390 aa)). WD repeat units follow at residues 124–168 (SNPD…TGQL), 170–208 (GHNS…YRRK), 248–287 (GHTA…MPAI), 332–372 (GHSA…AVQS), 383–423 (TRST…QVAT), 429–470 (GHTN…SLHV), and 477–511 (TENN…PQSA). A disordered region spans residues 207-228 (RKEPGQVGKKELNYDSEEDSDE). The span at 208 to 219 (KEPGQVGKKELN) shows a compositional bias: basic and acidic residues.

It belongs to the WD repeat WDR12/YTM1 family. In terms of assembly, component of the NOP7 complex, composed of ERB1, NOP7 and YTM1. The complex is held together by ERB1, which interacts with NOP7 via its N-terminal domain and with YTM1 via a high-affinity interaction between the seven-bladed beta-propeller domains of the 2 proteins. The NOP7 complex associates with the 66S pre-ribosome. Interacts (via UBL domain) with MDN1 (via VWFA/MIDAS domain).

The protein localises to the nucleus. It is found in the nucleolus. Its subcellular location is the nucleoplasm. Functionally, component of the NOP7 complex, which is required for maturation of the 25S and 5.8S ribosomal RNAs and formation of the 60S ribosome. This Yarrowia lipolytica (strain CLIB 122 / E 150) (Yeast) protein is Ribosome biogenesis protein YTM1.